The chain runs to 774 residues: Glycophorin-binding protein 130 (774 aa).

Positions 84-88 match the PEXEL motif motif; sequence RILAE. Disordered stretches follow at residues 97–243, 256–291, 310–334, 358–383, 410–434, 458–481, 509–533, 609–632, 661–682, and 709–734; these read EKTT…AADP, LTNT…EYAS, DPND…PEGQ, NTDP…DPEG, NTDP…SDPE, DPND…DPEG, NDEV…DPEG, and DPND…EGQI. Composition is skewed to basic and acidic residues over residues 117-140 and 174-198; these read TKKD…SEKQ and KKEE…EPKA. Polar residues predominate over residues 201-228; that stretch reads VSQKPSTSTRSNNEVKIRAASNQETLTS. 11 GBP repeats span residues 226–275, 276–325, 326–375, 376–425, 426–474, 475–524, 525–574, 575–624, 625–674, 675–724, and 725–774; these read LTSA…NKED, LTSA…DNKE, LTSS…NKED, LTSA…NKEE, and LTSA…NNEA. 9 stretches are compositionally biased toward basic and acidic residues: residues 264 to 276, 314 to 326, 364 to 376, 414 to 426, 464 to 476, 513 to 525, 613 to 625, 663 to 675, and 713 to 725; these read EVER…KEDL, DVER…KEDL, and EVER…KELT.

As to quaternary structure, interacts with host glycophorin.

It is found in the secreted. The protein resides in the cell surface. Its subcellular location is the host cytoplasm. Its function is as follows. Involved in merozoite invasion of host erythrocytes. In Plasmodium falciparum (isolate FCR-3 / Gambia), this protein is Glycophorin-binding protein 130.